Reading from the N-terminus, the 209-residue chain is MGAILGKKIGMTRLYNDKREAISCTIIQAGPCFVTQVKHAEKDGYDAYQIGIGERDEKKVNKPMLGHYKKAGVTPGYKIAEFSKSEINLELEAGAPLDLSVFKEGEKINVLGVSKGKGFAGVVKRHNFGGGSRTHGQSDRLRAPGSVGGSSDPSRTFRGTRMAGRMGGCNITVKNLEIIRIMPESNLLVVKGAIPGPKNSYVKIVSTKK.

Positions phenylalanine 128–alanine 163 are disordered.

This sequence belongs to the universal ribosomal protein uL3 family. Part of the 50S ribosomal subunit. Forms a cluster with proteins L14 and L19.

One of the primary rRNA binding proteins, it binds directly near the 3'-end of the 23S rRNA, where it nucleates assembly of the 50S subunit. The sequence is that of Large ribosomal subunit protein uL3 from Chlorobium phaeobacteroides (strain DSM 266 / SMG 266 / 2430).